The chain runs to 138 residues: ATP synthase epsilon chain, chloroplastic (138 aa).

It belongs to the ATPase epsilon chain family. In terms of assembly, F-type ATPases have 2 components, CF(1) - the catalytic core - and CF(0) - the membrane proton channel. CF(1) has five subunits: alpha(3), beta(3), gamma(1), delta(1), epsilon(1). CF(0) has three main subunits: a, b and c.

The protein localises to the plastid. The protein resides in the chloroplast thylakoid membrane. Produces ATP from ADP in the presence of a proton gradient across the membrane. The protein is ATP synthase epsilon chain, chloroplastic of Anthoceros angustus (Hornwort).